A 323-amino-acid chain; its full sequence is MPGDKQEAKNATQKTEEGVHITEALITKRNLTFPEDEDLSEKMFHTLDDLETVRLDGEGITCIGNLERLRNIHSLYLQSNKIQRIENLACITSLRFLSLAGNQIRHVENLLDLQYLQFLDLSENLIETLKLDELPQSLLILNLCGNPCTNQDGYRKMVIGALPLLLDLDKQPILERWTSDEEDKSSDEEEEFPELNGPFCAERGFFKDLEQELHQHQERRQQAALTEHLSRMETQPVLTDLPLLPAVPMAGDCSPAVTEEPGKEAAPKATSSTQMASSSKKQVPRNQKGSVQARKGALAATASKTSLAAAPSMTKSTNKRGTK.

4 LRR repeats span residues 49-70 (DLET…ERLR), 71-92 (NIHS…ACIT), 93-114 (SLRF…LDLQ), and 115-135 (YLQF…DELP). Residues 146–188 (NPCTNQDGYRKMVIGALPLLLDLDKQPILERWTSDEEDKSSDE) enclose the LRRCT domain. Position 178 is a phosphothreonine (Thr-178). 3 positions are modified to phosphoserine: Ser-179, Ser-185, and Ser-186. The stretch at 203–228 (RGFFKDLEQELHQHQERRQQAALTEH) forms a coiled coil. The tract at residues 252-323 (DCSPAVTEEP…TKSTNKRGTK (72 aa)) is disordered. Polar residues predominate over residues 269–290 (ATSSTQMASSSKKQVPRNQKGS). A compositionally biased stretch (low complexity) spans 297-310 (ALAATASKTSLAAA). Position 303 is a phosphoserine (Ser-303).

Its subcellular location is the cell projection. It is found in the cilium. The protein localises to the flagellum. Its function is as follows. Required for normal spermatogenesis and male fertility. Plays an important role in sperm flagellum biogenesis. The polypeptide is Leucine-rich repeat-containing protein 46 (Lrrc46) (Rattus norvegicus (Rat)).